The following is a 431-amino-acid chain: Acetylornithine aminotransferase (431 aa).

Pyridoxal 5'-phosphate-binding positions include 118 to 119 and phenylalanine 157; that span reads GA. Arginine 160 contacts N(2)-acetyl-L-ornithine. Position 251–254 (251–254) interacts with pyridoxal 5'-phosphate; that stretch reads DEVQ. Lysine 284 bears the N6-(pyridoxal phosphate)lysine mark. Serine 313 is a N(2)-acetyl-L-ornithine binding site. Threonine 314 provides a ligand contact to pyridoxal 5'-phosphate.

It belongs to the class-III pyridoxal-phosphate-dependent aminotransferase family. ArgD subfamily. In terms of assembly, homodimer. The cofactor is pyridoxal 5'-phosphate.

The protein resides in the cytoplasm. The enzyme catalyses N(2)-acetyl-L-ornithine + 2-oxoglutarate = N-acetyl-L-glutamate 5-semialdehyde + L-glutamate. It participates in amino-acid biosynthesis; L-arginine biosynthesis; N(2)-acetyl-L-ornithine from L-glutamate: step 4/4. The polypeptide is Acetylornithine aminotransferase (Bifidobacterium longum (strain NCC 2705)).